A 291-amino-acid polypeptide reads, in one-letter code: Early E4 34 kDa protein (291 aa).

This sequence belongs to the adenoviridae E4 30 to 34 kDa protein family. Interacts with E1B-55k.

The protein resides in the host nucleus. It is found in the host cytoplasm. Functionally, plays a major role to prevent cellular inhibition of viral genome replication by nuclear bodies. Assembles an SCF-like E3 ubiquitin ligase complex based on the cellular proteins ELOB, ELOC, CUL5 and RBX1, in cooperation with viral E1B-55K. This viral RING-type ligase ubiquitinates cellular substrates prior to proteasomal degradation: p53/TP53, LIG4, MRE11-RAD50-NBS1 (MRN) complex, ITGA3, DAXX and BLM. The polypeptide is Early E4 34 kDa protein (Homo sapiens (Human)).